A 135-amino-acid polypeptide reads, in one-letter code: Small ribosomal subunit protein bS16m/bS16c (135 aa).

The transit peptide at 1–7 (MVVRIRL) directs the protein to the chloroplast and mitochondrion. The disordered stretch occupies residues 87–135 (PMVAMGRKGGARDTRPVDPMTGRYVDAENKTVNANDNQPKEEDTEAKSA). The segment covering 124–135 (QPKEEDTEAKSA) has biased composition (basic and acidic residues).

Belongs to the bacterial ribosomal protein bS16 family. As to quaternary structure, component of the mitochondrial ribosome small subunit. In terms of tissue distribution, expressed at low levels in flowers, and, to a lower extent, in leaves, stems and roots.

Its subcellular location is the mitochondrion. The protein resides in the plastid. The protein localises to the chloroplast. The polypeptide is Small ribosomal subunit protein bS16m/bS16c (Arabidopsis thaliana (Mouse-ear cress)).